A 185-amino-acid chain; its full sequence is Ribosome-recycling factor (185 aa).

The segment covering 138–179 (TLKRQEKNGDITEDEQRSLEKQVQKVTDDATKEIDKLADQKS) has biased composition (basic and acidic residues). The disordered stretch occupies residues 138–185 (TLKRQEKNGDITEDEQRSLEKQVQKVTDDATKEIDKLADQKSQEITQG).

The protein belongs to the RRF family.

The protein resides in the cytoplasm. Responsible for the release of ribosomes from messenger RNA at the termination of protein biosynthesis. May increase the efficiency of translation by recycling ribosomes from one round of translation to another. This is Ribosome-recycling factor from Lactobacillus gasseri (strain ATCC 33323 / DSM 20243 / BCRC 14619 / CIP 102991 / JCM 1131 / KCTC 3163 / NCIMB 11718 / NCTC 13722 / AM63).